Consider the following 330-residue polypeptide: Peptide transport system ATP-binding protein SapD (330 aa).

One can recognise an ABC transporter domain in the interval 6–259 (IRNLTIEFKT…PHHPYTQALI (254 aa)). ATP is bound at residue 40–47 (GESGSGKS).

It belongs to the ABC transporter superfamily.

It is found in the cell inner membrane. Functionally, involved in a peptide intake transport system that plays a role in the resistance to antimicrobial peptides. The protein is Peptide transport system ATP-binding protein SapD of Salmonella typhimurium (strain LT2 / SGSC1412 / ATCC 700720).